The sequence spans 1056 residues: ISWI chromatin-remodeling complex ATPase CHR11 (1056 aa).

Over residues M1–A10 the composition is skewed to low complexity. 2 disordered regions span residues M1 to E80 and K133 to N175. Composition is skewed to acidic residues over residues F11 to E32 and P60 to K73. A coiled-coil region spans residues S12–S105. Residues K141–S151 are compositionally biased toward basic residues. Acidic residues predominate over residues E155–G169. Residues I201–E366 enclose the Helicase ATP-binding domain. Residue D214–T221 participates in ATP binding. Positions D317–H320 match the DEAH box motif. Positions L494–A645 constitute a Helicase C-terminal domain. Disordered stretches follow at residues W738–P774 and I814–E833. A compositionally biased stretch (acidic residues) spans D815–E833. 2 consecutive SANT domains span residues E840–K892 and Q941–I1002. Residues E1011 to R1056 are disordered. Residues T1047–R1056 show a composition bias toward basic residues.

The protein belongs to the SNF2/RAD54 helicase family. ISWI subfamily. Interacts with RLT1 and RLT2. Interacts (via C-terminus) with RLT1 (via the DDT domain), RLT2 (via the DDT domain), PTM (via the DDT domain) and DDR4 (via the DDT domain). Binds to FGT1. As to expression, highly expressed in growing tissues such as inflorescence and flower meristems, young leaves and floral organs. Expressed in roots, rosette and cauline leaves, stems, flowers, inflorescences and siliques.

Its subcellular location is the nucleus. Its function is as follows. Possesses intrinsic ATP-dependent nucleosome-remodeling activity. Constitutes the catalytic subunit of several complexes capable of forming ordered nucleosome arrays on chromatin. Involved in the formation of nucleosome distribution patterns. Involved in nuclear proliferation during megagametogenesis and cell expansion in the sporophyte. Required for the maintenance of the plant vegetative phase. In association with RLT1 or RLT2 may prevent the early activation of the vegetative-to-reproductive transition by regulating key genes that contribute to flower timing, such as FT, SEP1, SEP3, AGL8/FUL, SOC1 and FLC. Necessary to acquire heat stress (HS) memory. The protein is ISWI chromatin-remodeling complex ATPase CHR11 of Arabidopsis thaliana (Mouse-ear cress).